Here is a 553-residue protein sequence, read N- to C-terminus: Glucose-6-phosphate isomerase (553 aa).

Glu-357 (proton donor) is an active-site residue. Active-site residues include His-388 and Lys-514. The tract at residues 524 to 553 (ITGAGSPPPQSDSSTDGLVRRYRTERGRAG) is disordered. Residues 541 to 553 (LVRRYRTERGRAG) are compositionally biased toward basic and acidic residues.

The protein belongs to the GPI family.

It localises to the cytoplasm. The enzyme catalyses alpha-D-glucose 6-phosphate = beta-D-fructose 6-phosphate. The protein operates within carbohydrate biosynthesis; gluconeogenesis. It functions in the pathway carbohydrate degradation; glycolysis; D-glyceraldehyde 3-phosphate and glycerone phosphate from D-glucose: step 2/4. Catalyzes the reversible isomerization of glucose-6-phosphate to fructose-6-phosphate. This is Glucose-6-phosphate isomerase from Mycobacterium bovis (strain BCG / Tokyo 172 / ATCC 35737 / TMC 1019).